Reading from the N-terminus, the 190-residue chain is Elongation factor P-like protein (190 aa).

The protein belongs to the elongation factor P family.

This is Elongation factor P-like protein from Klebsiella pneumoniae (strain 342).